We begin with the raw amino-acid sequence, 167 residues long: I-Kappa-B like protein F2 (167 aa).

ANK repeat units lie at residues 54–86, 91–121, and 125–154; these read HGKQ…DING, FGNT…NMGI, and LFKT…RCGV.

It belongs to the polydnaviridae I-Kappa-B-like protein family.

In terms of biological role, suppresses the host immune response through NF-kappa-B inactivation. Possesses ankyrin repeat domains required for NF-kappa-B binding but lacks the regulatory regions required for dissociation from NF-kappa-B and degradation. Therefore, prevents host NF-kappa-B release and subsequent activation. In Microplitis demolitor bracovirus (isolate Webb) (MdBV), this protein is I-Kappa-B like protein F2 (F3).